The sequence spans 528 residues: MSKQLEQEIAKRRTFGIISHPDAGKTTLTEKLLLFGGAINMAGAVKSRKIERKATSDWMAIEQERGISVTTSVMKFTYREHEINLLDTPGHQDFSEDTYRVLTAVDSAIMVIDSAKGVEAQTEKLMEVCRMRNTPIITFINKLDREGMHPLDIMADIEDKLQIECAPLSWPIGMGKDFKGVYNIYQKRLHLFTPGTESIDGQGQMIEDLDDPLLDELLGRQAVELREDLELLAGAATPLEYDQYLSATQSPVFFGSAVNNFGVQEMLDAFIDMAPAPGPRMAVSREVLPSEENFSGFVFKIQANMDPAHRDRIAFFRICSGKFTRGMKVHHHRLGKDISLANATIFMAQERANVEEAWPGDIIGIHNHGTIKIGDTFSIKEPLKFTGIPNFAPEHFRRVILKNPLKMKQLQKGLIQLAEEGAIQVFRPIIGADYIMGAVGVLQFEVTMARLKNEYSVDAIYEPISYQAARWVSCEDKKALAEFEKKNQSTLARDSEGFLTHLAQSDWMLNFFMEKWPNIDFHKTRENI.

The region spanning 10–280 (AKRRTFGIIS…IDMAPAPGPR (271 aa)) is the tr-type G domain. GTP is bound by residues 19–26 (SHPDAGKT), 87–91 (DTPGH), and 141–144 (NKLD).

This sequence belongs to the TRAFAC class translation factor GTPase superfamily. Classic translation factor GTPase family. PrfC subfamily.

It localises to the cytoplasm. Functionally, increases the formation of ribosomal termination complexes and stimulates activities of RF-1 and RF-2. It binds guanine nucleotides and has strong preference for UGA stop codons. It may interact directly with the ribosome. The stimulation of RF-1 and RF-2 is significantly reduced by GTP and GDP, but not by GMP. This Desulfotalea psychrophila (strain LSv54 / DSM 12343) protein is Peptide chain release factor 3.